The sequence spans 141 residues: Large ribosomal subunit protein bL17 (141 aa).

It belongs to the bacterial ribosomal protein bL17 family. As to quaternary structure, part of the 50S ribosomal subunit. Contacts protein L32.

The protein is Large ribosomal subunit protein bL17 of Allorhizobium ampelinum (strain ATCC BAA-846 / DSM 112012 / S4) (Agrobacterium vitis (strain S4)).